A 928-amino-acid polypeptide reads, in one-letter code: Periplasmic nitrate reductase (928 aa).

Residues 1–33 (MAFSRREFLKSAAAASAASAVGMSVPSQLLAQA) constitute a signal peptide (tat-type signal). The 4Fe-4S Mo/W bis-MGD-type domain occupies 40-96 (WRWDKSVCRFCGTGCGIMVATKNDQIVAVKGDPAAPVNRGLNCIKGYFNAKIMYGAD). Cys-47, Cys-50, Cys-54, and Cys-82 together coordinate [4Fe-4S] cluster. Mo-bis(molybdopterin guanine dinucleotide) is bound by residues Lys-84, Gln-152, Asn-177, Cys-181, 214–221 (WGANMAEM), 265–267 (QTD), Met-422, Gln-426, Asn-532, 557–558 (SD), Lys-580, Asp-607, and 818–827 (TGRVLEHWHS). Residue Trp-894 coordinates substrate. Mo-bis(molybdopterin guanine dinucleotide) is bound by residues Asn-902 and Lys-919.

The protein belongs to the prokaryotic molybdopterin-containing oxidoreductase family. NasA/NapA/NarB subfamily. In terms of assembly, component of the periplasmic nitrate reductase NapAB complex composed of NapA and NapB. [4Fe-4S] cluster is required as a cofactor. The cofactor is Mo-bis(molybdopterin guanine dinucleotide). Post-translationally, predicted to be exported by the Tat system. The position of the signal peptide cleavage has not been experimentally proven.

The protein resides in the periplasm. It carries out the reaction 2 Fe(II)-[cytochrome] + nitrate + 2 H(+) = 2 Fe(III)-[cytochrome] + nitrite + H2O. In terms of biological role, catalytic subunit of the periplasmic nitrate reductase complex NapAB. Receives electrons from NapB and catalyzes the reduction of nitrate to nitrite. This Wolinella succinogenes (strain ATCC 29543 / DSM 1740 / CCUG 13145 / JCM 31913 / LMG 7466 / NCTC 11488 / FDC 602W) (Vibrio succinogenes) protein is Periplasmic nitrate reductase.